The chain runs to 1169 residues: Chromosome partition protein Smc (1169 aa).

Position 32–39 (32–39 (PNGCGKSN)) interacts with ATP. Coiled-coil stretches lie at residues 170 to 265 (ISKY…TGEE) and 307 to 481 (IRHT…ERLN). An SMC hinge domain is found at 525-620 (DRLGEKIEVA…CASDPAEAAE (96 aa)). Coiled-coil stretches lie at residues 656 to 914 (ALAR…MKLA) and 985 to 1014 (RYLE…ECRA).

The protein belongs to the SMC family. As to quaternary structure, homodimer.

Its subcellular location is the cytoplasm. Required for chromosome condensation and partitioning. This is Chromosome partition protein Smc from Methylococcus capsulatus (strain ATCC 33009 / NCIMB 11132 / Bath).